The sequence spans 133 residues: uncharacterized protein (133 aa).

The FAS1 domain occupies 1–130 (MPNIVEIAVS…GIIHVIDNVI (130 aa)).

This is an uncharacterized protein from Synechocystis sp. (strain ATCC 27184 / PCC 6803 / Kazusa).